A 282-amino-acid chain; its full sequence is Pantothenate synthetase (282 aa).

Position 30-37 (30-37 (MGALHAGH)) interacts with ATP. Residue H37 is the Proton donor of the active site. Q61 lines the (R)-pantoate pocket. Q61 provides a ligand contact to beta-alanine. 147-150 (GEKD) is an ATP binding site. (R)-pantoate is bound at residue Q153. Residues V176 and 184–187 (LSSR) contribute to the ATP site.

The protein belongs to the pantothenate synthetase family. Homodimer.

The protein resides in the cytoplasm. It carries out the reaction (R)-pantoate + beta-alanine + ATP = (R)-pantothenate + AMP + diphosphate + H(+). It participates in cofactor biosynthesis; (R)-pantothenate biosynthesis; (R)-pantothenate from (R)-pantoate and beta-alanine: step 1/1. Functionally, catalyzes the condensation of pantoate with beta-alanine in an ATP-dependent reaction via a pantoyl-adenylate intermediate. The polypeptide is Pantothenate synthetase (Bacteroides thetaiotaomicron (strain ATCC 29148 / DSM 2079 / JCM 5827 / CCUG 10774 / NCTC 10582 / VPI-5482 / E50)).